A 202-amino-acid chain; its full sequence is Nucleoside triphosphate pyrophosphatase (202 aa).

Catalysis depends on aspartate 79, which acts as the Proton acceptor.

Belongs to the Maf family. A divalent metal cation serves as cofactor.

Its subcellular location is the cytoplasm. It carries out the reaction a ribonucleoside 5'-triphosphate + H2O = a ribonucleoside 5'-phosphate + diphosphate + H(+). The enzyme catalyses a 2'-deoxyribonucleoside 5'-triphosphate + H2O = a 2'-deoxyribonucleoside 5'-phosphate + diphosphate + H(+). Its function is as follows. Nucleoside triphosphate pyrophosphatase. May have a dual role in cell division arrest and in preventing the incorporation of modified nucleotides into cellular nucleic acids. This is Nucleoside triphosphate pyrophosphatase from Nitrobacter winogradskyi (strain ATCC 25391 / DSM 10237 / CIP 104748 / NCIMB 11846 / Nb-255).